The chain runs to 532 residues: Spore coat protein SP85 (532 aa).

The N-terminal stretch at 1–19 is a signal peptide; it reads MRLLSVLLIGFLCLAGTYA. A glycan (N-linked (GlcNAc...) asparagine) is linked at asparagine 47. The interval 197–265 is disordered; sequence TQSPTQPPTQ…PTQPPTQPPV (69 aa). Over residues 201-263 the composition is skewed to pro residues; the sequence is TQPPTQPPTY…YPPTQPPTQP (63 aa). The 23-residue stretch at 267-289 folds into the Follistatin-like 1 domain; that stretch reads DCSTLECPEGFHCEIVNNRRTCV. The segment at 297–320 is disordered; it reads THPPTQSPTYPPTQPPTQPPTYPP. Follistatin-like domains are found at residues 335-359, 400-423, and 430-452; these read SCDNVRCPRGYHCECNHWENVARCV, TCDQVRCPRKHHCECNRKGQVFCV, and TCKQVGCPENHECVSRRGELHCV.

Binds to cotE. Post-translationally, O-glycosylated.

Its subcellular location is the spore wall. Required for incorporation of cotE into the spore coat and for the formation of the outer layer. Has a cross-bridging function between cellulose and other coat proteins. This is Spore coat protein SP85 (pspB) from Dictyostelium discoideum (Social amoeba).